A 77-amino-acid polypeptide reads, in one-letter code: Cysteine-rich protein 1 (77 aa).

In terms of domain architecture, LIM zinc-binding spans 2-63 (PKCPKCDKEV…HPCYSAMFGP (62 aa)). An N6-acetyllysine mark is found at lysine 9 and lysine 22. Residue arginine 68 is modified to Omega-N-methylarginine.

In terms of biological role, seems to have a role in zinc absorption and may function as an intracellular zinc transport protein. This chain is Cysteine-rich protein 1 (Crip1), found in Mus musculus (Mouse).